The following is a 452-amino-acid chain: MQVTETQADGLKRAFRVVVSAADLGAKADAKLAELKGQVKLNGFRPGKVPVAHLKRVYGKSVMSEVIEQTVNETNGKIVEEHGFKLALQPKVKLPEEDPQAQGLLEGGKDLAYDLEIEILPKIELGNFKDISVEKLVVEVSDAEVDETIQRIADANRPFVTREGGYAENGDRVTIDFTGYVDGEKFPGGEGQDIDVLLGSNGFIPGFEEQLLGVYAGDNRTLNVTFPEAYAAKELAGKAATFEVTVKSVAAPGPLTLDDEFAKTLGQESLEKLKEMVRARIASEHAGAARQKVKRALLDALDTTHQFAVPEGLVEQEFFGVWSRVQEDLAAQNRSFADEGTTEEEARADYRKIAERRVRLGLVLAEIGERNNIQVSEDEVTRAVVERARQFPGQEQQVWEYYRRTPEALASVRAPLFEEKVVDFLLELANVTEKTVTREELYKEEEDDEKAA.

The PPIase FKBP-type domain maps to 170 to 255 (GDRVTIDFTG…VKSVAAPGPL (86 aa)).

The protein belongs to the FKBP-type PPIase family. Tig subfamily.

The protein localises to the cytoplasm. The catalysed reaction is [protein]-peptidylproline (omega=180) = [protein]-peptidylproline (omega=0). Involved in protein export. Acts as a chaperone by maintaining the newly synthesized protein in an open conformation. Functions as a peptidyl-prolyl cis-trans isomerase. The chain is Trigger factor from Xanthobacter autotrophicus (strain ATCC BAA-1158 / Py2).